The following is a 306-amino-acid chain: D-alanine--D-alanine ligase (306 aa).

Residues Glu-18 and Ser-150 contribute to the active site. Positions Lys-104–Glu-303 constitute an ATP-grasp domain. Position 134–189 (Val-134–Thr-189) interacts with ATP. The Mg(2+) site is built by Asp-257, Glu-270, and Asn-272. The active site involves Ser-281.

Belongs to the D-alanine--D-alanine ligase family. Mg(2+) is required as a cofactor. Requires Mn(2+) as cofactor.

The protein localises to the cytoplasm. It catalyses the reaction 2 D-alanine + ATP = D-alanyl-D-alanine + ADP + phosphate + H(+). Its pathway is cell wall biogenesis; peptidoglycan biosynthesis. Cell wall formation. This chain is D-alanine--D-alanine ligase, found in Haemophilus influenzae (strain ATCC 51907 / DSM 11121 / KW20 / Rd).